Reading from the N-terminus, the 2752-residue chain is Piezo-type mechanosensitive ion channel component 2 (2752 aa).

At 1–12 the chain is on the cytoplasmic side; that stretch reads MASEVVCGLIFR. The chain crosses the membrane as a helical span at residues 13-24; that stretch reads LLLPICLAVACA. Over 25–30 the chain is Extracellular; sequence FRYNGL. A helical membrane pass occupies residues 31–43; sequence SFVYLIYLLLIPL. Residues 44–50 are Cytoplasmic-facing; the sequence is FSEPTKT. The chain crosses the membrane as a helical span at residues 51–76; it reads TMQGHTGRLLKSLCFISLSFLLLHII. Residues 77–122 lie on the Extracellular side of the membrane; the sequence is FHITLVSLEAQHRIAPGYNCSTWEKTFRQIGFESLKGADAGNGIRV. N95 carries N-linked (GlcNAc...) asparagine glycosylation. The chain crosses the membrane as a helical span at residues 123–141; it reads FVPDIGMFIASLTIWLLCR. Topologically, residues 142-221 are cytoplasmic; the sequence is NIVQKPVTDE…KEFIGNMITT (80 aa). A helical membrane pass occupies residues 222–237; that stretch reads AGKVVVTILLGSSGMM. The Extracellular segment spans residues 238-240; sequence LPS. Residues 241 to 258 traverse the membrane as a helical segment; it reads LTSSVYFFVFLGLCTWWS. The Cytoplasmic segment spans residues 259-264; that stretch reads WCRTFD. A helical transmembrane segment spans residues 265–287; that stretch reads PLLFSCLCVLLAIFTAGHLIGLY. The Extracellular portion of the chain corresponds to 288 to 335; it reads LYQFQFFQEAVPPNDYYARLFGIKSVIQTDCSSTWKIIVNPDLSWYHH. Residues 336–355 traverse the membrane as a helical segment; it reads ANPILLLVMYYTLATLIRIW. The Cytoplasmic segment spans residues 356–492; that stretch reads LQEPLVQDEG…SIKVHAMVSV (137 aa). The disordered stretch occupies residues 446-478; it reads STPQYRWEPSDESSEKREEEEEEKEEFEEERSR. Residues 463-474 are compositionally biased toward acidic residues; it reads EEEEEEKEEFEE. A helical membrane pass occupies residues 493–514; it reads FQFIMKQSYICALIAMMAWSIT. At 515 to 519 the chain is on the extracellular side; that stretch reads YHSWL. The helical transmembrane segment at 520-531 threads the bilayer; the sequence is TFVLLIWSCTLW. Over 532 to 535 the chain is Cytoplasmic; sequence MIRN. A helical transmembrane segment spans residues 536–562; that stretch reads RRKYAMISSPFMVVYGNLLLILQYIWS. Residues 563–583 are Extracellular-facing; sequence FELPEIKKVPGFLEKKEPGEL. The helical transmembrane segment at 584-614 threads the bilayer; it reads ASKILFTITFWLLLRQHLTEQKALQEKEALL. The Cytoplasmic portion of the chain corresponds to 615 to 685; that stretch reads SEVKIGSQEN…GNLVVAMFIK (71 aa). A compositionally biased stretch (acidic residues) spans 623–632; that stretch reads ENEEKDEELQ. The disordered stretch occupies residues 623 to 664; that stretch reads ENEEKDEELQDIQVEGEPKEEEEEEAKEEKQERKKVEQEEAE. A compositionally biased stretch (basic and acidic residues) spans 649–660; it reads KEEKQERKKVEQ. Residues 686-699 traverse the membrane as a helical segment; the sequence is YWIYVCGGMFFFVS. The Extracellular portion of the chain corresponds to 700 to 705; it reads FEGKIV. A helical transmembrane segment spans residues 706–724; it reads MYKIIYMVLFLFCVALYQV. Residues 725 to 733 are Cytoplasmic-facing; sequence HYEWWRKIL. A helical membrane pass occupies residues 734–753; the sequence is KYFWMSVVIYTMLVLIFIYT. Topologically, residues 754 to 785 are extracellular; that stretch reads YQFENFPGLWQNMTGLKKEKLEDLGLKQFTVA. Residues 786 to 807 form a helical membrane-spanning segment; sequence ELFTRIFIPTSFLLVCILHLHY. Residues 808-940 lie on the Cytoplasmic side of the membrane; it reads FHDRFLELTD…QVFMWWILEL (133 aa). The residue at position 838 (S838) is a Phosphoserine. Over residues 862–883 the composition is skewed to basic and acidic residues; that stretch reads PGEEKLEGYSEKAQKGDLGKDS. The segment at 862–902 is disordered; the sequence is PGEEKLEGYSEKAQKGDLGKDSEESEEDGEEEEESEEEEET. Acidic residues predominate over residues 884–902; that stretch reads EESEEDGEEEEESEEEEET. Residues 941–956 traverse the membrane as a helical segment; it reads HIIKIVSSYIIWVSVK. Residues 957–962 lie on the Extracellular side of the membrane; that stretch reads EVSLFN. Residues 963 to 972 traverse the membrane as a helical segment; that stretch reads YVFLISWAFA. Topologically, residues 973-980 are cytoplasmic; sequence LPYAKLRR. Residues 981-1001 form a helical membrane-spanning segment; sequence LASSVCTVWTCVIIVCKMLYQ. Topologically, residues 1002–1057 are extracellular; it reads LQTIKPENFSVNCSLPNENQTNIPFNELNKSLLYSAPIDPTEWVGLRKSSPLLVYL. N1013 carries an N-linked (GlcNAc...) asparagine glycan. A disulfide bridge links C1014 with C1192. The helical transmembrane segment at 1058–1082 threads the bilayer; sequence RNNLLMLAILAFEVTIYRHQEYYRG. Topologically, residues 1083–1123 are cytoplasmic; the sequence is RNNLTAPVSRTIFHDITRLHLDDGLINCAKYFINYFFYKFG. A helical membrane pass occupies residues 1124 to 1138; it reads LETCFLMSVNVIGQR. Residues 1139-1140 lie on the Extracellular side of the membrane; sequence MD. The chain crosses the membrane as a helical span at residues 1141 to 1154; the sequence is FYAMIHACWLIAVL. At 1155-1165 the chain is on the cytoplasmic side; the sequence is YRRRRKAIAEI. The chain crosses the membrane as a helical span at residues 1166 to 1185; the sequence is WPKYCCFLACIITFQYFICI. The Extracellular portion of the chain corresponds to 1186 to 1222; that stretch reads GIPPAPCRDYPWRFKGASFNDNIIKWLYFPDFIVRPN. Residues 1223–1243 traverse the membrane as a helical segment; sequence PVFLVYDFMLLLCASLQRQIF. At 1244–1297 the chain is on the cytoplasmic side; the sequence is EDENKAAVRIMAGDNVEICMNLDAASFSQHNPVPDFIHCRSYLDMSKVIIFSYL. A helical membrane pass occupies residues 1298–1310; the sequence is FWFVLTIIFITGT. Residues 1311-1316 are Extracellular-facing; the sequence is TRISIF. A helical transmembrane segment spans residues 1317–1329; sequence CMGYLVACFYFLL. Over 1330-1338 the chain is Cytoplasmic; the sequence is FGGDLLLKP. Residues 1339–1364 traverse the membrane as a helical segment; it reads IKSILRYWDWLIAYNVFVITMKNILS. The Extracellular segment spans residues 1365–1413; sequence IGACGYIGTLVHNSCWLIQAFSLACTVKGYQMPAANSPCTLPSGEAGII. The chain crosses the membrane as a helical span at residues 1414–1430; sequence WDSICFAFLLLQRRVFM. The Cytoplasmic segment spans residues 1431-1921; the sequence is SYYFLHVVAD…YAMYNTLVAR (491 aa). Positions 1458-1529 form a coiled coil; sequence TIVKAVKARI…EREADKQKAK (72 aa). 3 disordered regions span residues 1488–1534, 1593–1636, and 1844–1868; these read QQKY…KKKQ, ALRQ…KKSD, and SQDD…KLGS. Positions 1594 to 1615 are enriched in basic residues; that stretch reads LRQRHKEKKRSAREERKRRRKG. Residues 1922–1936 traverse the membrane as a helical segment; the sequence is SEMVCYFVIILNHMV. Over 1937–1943 the chain is Extracellular; sequence SASMITL. Residues 1944 to 1955 traverse the membrane as a helical segment; that stretch reads LLPILIFLWAML. The Cytoplasmic portion of the chain corresponds to 1956–1961; sequence SVPRPS. Residues 1962–1983 form a helical membrane-spanning segment; it reads RRFWMMAIVYTEVAIVVKYFFQ. The Extracellular portion of the chain corresponds to 1984–2016; that stretch reads FGFFPWNKNVEVNKDKPYHPPNIIGVEKKEGYV. The chain crosses the membrane as a helical span at residues 2017-2035; sequence LYDLIQLLALFFHRSILKC. The Cytoplasmic segment spans residues 2036–2189; sequence HGLWDEDDMT…HPEYSAVTDV (154 aa). Disordered stretches follow at residues 2047–2069 and 2090–2135; these read SGMA…DSSD and QQTA…SVLS. A compositionally biased stretch (low complexity) spans 2100 to 2127; sequence GSSSEPSQRSSFSSNRSQRGSTSTRNSS. Residues 2190–2209 form a helical membrane-spanning segment; it reads YVLMFLADTVDFIIIVFGFW. Over 2210–2231 the chain is Extracellular; the sequence is AFGKHSAAADITSSLSEDQVPG. The helical transmembrane segment at 2232–2252 threads the bilayer; that stretch reads PFLVMVLIQFGTMVVDRALYL. The Cytoplasmic portion of the chain corresponds to 2253 to 2256; that stretch reads RKTV. Residues 2257-2280 traverse the membrane as a helical segment; that stretch reads LGKVIFQVILVFGIHFWMFFILPG. At 2281–2289 the chain is on the extracellular side; it reads VTERKFSQN. The helical transmembrane segment at 2290–2312 threads the bilayer; the sequence is LVAQLWYFVKCVYFGLSAYQIRC. Residues 2313–2397 lie on the Cytoplasmic side of the membrane; sequence GYPTRVLGNF…YPQPRGQKKK (85 aa). The chain crosses the membrane as a helical span at residues 2398–2421; it reads KVVKYGMGGMIIVLLICIVWFPLL. At 2422–2669 the chain is on the extracellular side; that stretch reads FMSLIKSVAG…PSLGFLAGYG (248 aa). The chain crosses the membrane as a helical span at residues 2670-2690; sequence IMGLYASVVLVIGKFVREFFS. Residues 2691 to 2752 lie on the Cytoplasmic side of the membrane; the sequence is GISHSIMFEE…MIKWTREKTN (62 aa).

The protein belongs to the PIEZO (TC 1.A.75) family. As to quaternary structure, homotrimer; the homotrimer forms a propeller-shaped Piezo channel with a cation-ion conducting pore. Heterotrimeric interaction may occur between PIEZO1 and PIEZO2. Interacts with STOML3. Interacts with TMC7; the interaction inhibits PIEZO2-conducted mechanically activated currents. Interacts with TMC1; the interaction may be part of the MET complex. Interacts with MDFIC (via C-terminus); the interaction prolongs Piezo channel inactivation. Interacts with MDFI (via C-terminus); the interaction prolongs Piezo channel inactivation.

It is found in the cell membrane. The enzyme catalyses Ca(2+)(in) = Ca(2+)(out). Regulated by auxillary subunits MDFIC and MDFI. Channel activity is inhibited by TMEM120A. Phosphatidic acid and lysophosphatidic acid inhibit PIEZO2 channel activity. Functionally, pore-forming subunit of the mechanosensitive non-specific cation Piezo channel required for rapidly adapting mechanically activated (MA) currents and has a key role in sensing touch and tactile pain. Piezo channels are homotrimeric three-blade propeller-shaped structures that utilize a cap-motion and plug-and-latch mechanism to gate their ion-conducting pathways. Expressed in sensory neurons, is essential for diverse physiological processes, including respiratory control, systemic metabolism, urinary function, and proprioception. Mediates airway stretch sensing, enabling efficient respiration at birth and maintaining normal breathing in adults. It regulates brown and beige adipose tissue morphology and function, preventing systemic hypermetabolism. In the lower urinary tract, acts as a sensor in both the bladder urothelium and innervating sensory neurons being required for bladder-stretch sensing and urethral micturition reflexes, ensuring proper urinary function. Additionally, PIEZO2 serves as the principal mechanotransducer in proprioceptors, facilitating proprioception and coordinated body movements. In inner ear hair cells, PIEZO1/2 subunits may constitute part of the mechanotransducer (MET) non-selective cation channel complex where they may act as pore-forming ion-conducting component in the complex. Required for Merkel-cell mechanotransduction. Plays a major role in light-touch mechanosensation. This chain is Piezo-type mechanosensitive ion channel component 2, found in Homo sapiens (Human).